We begin with the raw amino-acid sequence, 270 residues long: Thiazole synthase (270 aa).

Catalysis depends on Lys-112, which acts as the Schiff-base intermediate with DXP. 1-deoxy-D-xylulose 5-phosphate-binding positions include Gly-173, 199 to 200 (AG), and 221 to 222 (NS).

This sequence belongs to the ThiG family. As to quaternary structure, homotetramer. Forms heterodimers with either ThiH or ThiS.

It localises to the cytoplasm. It catalyses the reaction [ThiS sulfur-carrier protein]-C-terminal-Gly-aminoethanethioate + 2-iminoacetate + 1-deoxy-D-xylulose 5-phosphate = [ThiS sulfur-carrier protein]-C-terminal Gly-Gly + 2-[(2R,5Z)-2-carboxy-4-methylthiazol-5(2H)-ylidene]ethyl phosphate + 2 H2O + H(+). It functions in the pathway cofactor biosynthesis; thiamine diphosphate biosynthesis. Catalyzes the rearrangement of 1-deoxy-D-xylulose 5-phosphate (DXP) to produce the thiazole phosphate moiety of thiamine. Sulfur is provided by the thiocarboxylate moiety of the carrier protein ThiS. In vitro, sulfur can be provided by H(2)S. This is Thiazole synthase from Pseudomonas putida (strain ATCC 700007 / DSM 6899 / JCM 31910 / BCRC 17059 / LMG 24140 / F1).